The sequence spans 135 residues: Flagellar assembly factor FliW 1 (135 aa).

The protein belongs to the FliW family. As to quaternary structure, interacts with translational regulator CsrA and flagellin(s).

The protein resides in the cytoplasm. Acts as an anti-CsrA protein, binds CsrA and prevents it from repressing translation of its target genes, one of which is flagellin. Binds to flagellin and participates in the assembly of the flagellum. This chain is Flagellar assembly factor FliW 1, found in Helicobacter pylori (strain ATCC 700392 / 26695) (Campylobacter pylori).